The following is a 783-amino-acid chain: Endonuclease MutS2 (783 aa).

328–335 (GPNTGGKT) contributes to the ATP binding site. In terms of domain architecture, Smr spans 708–783 (LDLRGKRYEE…GSGCTIATLG (76 aa)).

The protein belongs to the DNA mismatch repair MutS family. MutS2 subfamily. Homodimer. Binds to stalled ribosomes, contacting rRNA.

In terms of biological role, endonuclease that is involved in the suppression of homologous recombination and thus may have a key role in the control of bacterial genetic diversity. Its function is as follows. Acts as a ribosome collision sensor, splitting the ribosome into its 2 subunits. Detects stalled/collided 70S ribosomes which it binds and splits by an ATP-hydrolysis driven conformational change. Acts upstream of the ribosome quality control system (RQC), a ribosome-associated complex that mediates the extraction of incompletely synthesized nascent chains from stalled ribosomes and their subsequent degradation. Probably generates substrates for RQC. The chain is Endonuclease MutS2 from Streptococcus thermophilus (strain ATCC BAA-491 / LMD-9).